The sequence spans 681 residues: Sterile alpha motif domain-containing protein 11 (681 aa).

Disordered regions lie at residues 41–77 (RNLK…EDGP), 212–234 (YHLG…HLPS), 251–307 (GPSG…APHV), and 407–498 (LLAL…GAEG). A Glycyl lysine isopeptide (Lys-Gly) (interchain with G-Cter in SUMO2) cross-link involves residue Lys72. Positions 219–234 (HGEDPPWHDPPHHLPS) are enriched in basic and acidic residues. Residues 412 to 423 (PQGPPGSGPPTP) are compositionally biased toward pro residues. Thr485 carries the phosphothreonine modification. Positions 543–608 (WTVDDVCSFV…AQVARRLGRV (66 aa)) constitute an SAM domain. Residues 625–681 (LRAPERELGTGEQPLSPTTATSPYGGGHALAGQTSPKQENGTLALLPGAPDPSQPLC) are disordered. Polar residues-rich tracts occupy residues 637 to 646 (QPLSPTTATS) and 656 to 665 (GQTSPKQENG). At Ser640 the chain carries Phosphoserine.

Self-associates. Component of a Polycomb group (PcG) multiprotein PRC1-like complex. Interacts with SAMD7 and PHC2. As to expression, expressed in the outer and inner nuclear layers, ganglion cell layer and rod photoreceptors of the retina (at protein level). Widely expressed, showing the highest expression in kidney, prostate and retina.

The protein localises to the nucleus. Its function is as follows. Component of a Polycomb group (PcG) multiprotein PRC1-like complex, essential for establishing rod photoreceptor cell identity and function by silencing nonrod gene expression in developing rod photoreceptor cells. This is Sterile alpha motif domain-containing protein 11 (SAMD11) from Homo sapiens (Human).